The chain runs to 37 residues: Lambda-hexatoxin-Hf1a (37 aa).

Intrachain disulfides connect Cys-4-Cys-18, Cys-11-Cys-23, Cys-14-Cys-15, and Cys-17-Cys-34.

This sequence belongs to the neurotoxin 11 (kappa toxin) family. As to expression, expressed by the venom gland.

It localises to the secreted. In terms of biological role, this excitatory toxin inhibits insect calcium-activated potassium (KCa) channels (Slo-type). This chain is Lambda-hexatoxin-Hf1a, found in Hadronyche formidabilis (Northern tree funnel-web spider).